The chain runs to 122 residues: Acidic phospholipase A2 homolog vipoxin A chain (122 aa).

Disulfide bonds link C26–C115, C28–C44, C43–C95, C49–C122, C50–C88, C57–C81, and C75–C86.

Belongs to the phospholipase A2 family. Group II subfamily. D49 sub-subfamily. In terms of assembly, heterodimer of A and B (AC P14420) chains; non-covalently linked. The A chain (acidic) is non-toxic, and increases the toxicity of the B chain (basic). The A chain may act as factor stabilizing the complex structure and hence retaining its toxicity by preventing non-specific binding. Upon binding to the target membranes the A chain may dissociate. In terms of tissue distribution, expressed by the venom gland.

The protein localises to the secreted. Its function is as follows. Heterodimer: postsynaptic neurotoxin. Functionally, monomer: Acidic phospholipase A2 homolog that is non-toxic. The sequence is that of Acidic phospholipase A2 homolog vipoxin A chain from Vipera ammodytes meridionalis (Eastern sand viper).